Reading from the N-terminus, the 80-residue chain is U-Asilidin(1)-Dg12 (80 aa).

An N-terminal signal peptide occupies residues 1-24 (MARLLVVSVGVFLAVIMLSSETMS). Residues 25-46 (LPAGENLPALTLFEAQNQLIGL) constitute a propeptide that is removed on maturation. Cystine bridges form between cysteine 53–cysteine 67, cysteine 60–cysteine 71, and cysteine 66–cysteine 78.

It belongs to the asilidin-1 family. In terms of tissue distribution, expressed by the venom gland.

Its subcellular location is the secreted. Its function is as follows. Neurotoxin that may modulate ions channels (other than those tested). In vivo, induces neurotoxic effects when injected into insects (tested on L.cuprina and A.domesticus). This chain is U-Asilidin(1)-Dg12, found in Dolopus genitalis (Giant Australian assassin fly).